The primary structure comprises 430 residues: Adenylosuccinate synthetase (430 aa).

GTP contacts are provided by residues 13–19 and 41–43; these read GDEGKGK and GHT. D14 acts as the Proton acceptor in catalysis. 2 residues coordinate Mg(2+): D14 and G41. IMP-binding positions include 14–17, 39–42, T130, R144, Q225, T240, and R304; these read DEGK and NAGH. The active-site Proton donor is H42. A substrate-binding site is contributed by 300-306; the sequence is STTGRAR. Residues R306, 332–334, and 414–416 each bind GTP; these read KLD and STG.

Belongs to the adenylosuccinate synthetase family. As to quaternary structure, homodimer. Mg(2+) is required as a cofactor.

The protein resides in the cytoplasm. It carries out the reaction IMP + L-aspartate + GTP = N(6)-(1,2-dicarboxyethyl)-AMP + GDP + phosphate + 2 H(+). The protein operates within purine metabolism; AMP biosynthesis via de novo pathway; AMP from IMP: step 1/2. Functionally, plays an important role in the de novo pathway of purine nucleotide biosynthesis. Catalyzes the first committed step in the biosynthesis of AMP from IMP. The sequence is that of Adenylosuccinate synthetase from Pseudomonas entomophila (strain L48).